The primary structure comprises 574 residues: Proline--tRNA ligase (574 aa).

It belongs to the class-II aminoacyl-tRNA synthetase family. ProS type 1 subfamily. In terms of assembly, homodimer.

The protein localises to the cytoplasm. It catalyses the reaction tRNA(Pro) + L-proline + ATP = L-prolyl-tRNA(Pro) + AMP + diphosphate. In terms of biological role, catalyzes the attachment of proline to tRNA(Pro) in a two-step reaction: proline is first activated by ATP to form Pro-AMP and then transferred to the acceptor end of tRNA(Pro). As ProRS can inadvertently accommodate and process non-cognate amino acids such as alanine and cysteine, to avoid such errors it has two additional distinct editing activities against alanine. One activity is designated as 'pretransfer' editing and involves the tRNA(Pro)-independent hydrolysis of activated Ala-AMP. The other activity is designated 'posttransfer' editing and involves deacylation of mischarged Ala-tRNA(Pro). The misacylated Cys-tRNA(Pro) is not edited by ProRS. The sequence is that of Proline--tRNA ligase from Nitratidesulfovibrio vulgaris (strain DP4) (Desulfovibrio vulgaris).